A 189-amino-acid chain; its full sequence is GMP synthase [glutamine-hydrolyzing] subunit A (189 aa).

The 189-residue stretch at 1 to 189 (MIVILNNGGQ…CKKCGFEFEE (189 aa)) folds into the Glutamine amidotransferase type-1 domain. The Nucleophile role is filled by cysteine 76. Catalysis depends on residues histidine 163 and glutamate 165.

In terms of assembly, heterodimer composed of a glutamine amidotransferase subunit (A) and a GMP-binding subunit (B).

It catalyses the reaction XMP + L-glutamine + ATP + H2O = GMP + L-glutamate + AMP + diphosphate + 2 H(+). It participates in purine metabolism; GMP biosynthesis; GMP from XMP (L-Gln route): step 1/1. Functionally, catalyzes the synthesis of GMP from XMP. In Methanococcus maripaludis (strain C5 / ATCC BAA-1333), this protein is GMP synthase [glutamine-hydrolyzing] subunit A.